The chain runs to 926 residues: Probable Xaa-Pro aminopeptidase PTT_10145 (926 aa).

Positions 274, 285, 435, and 476 each coordinate Mn(2+). 5 disordered regions span residues 505–538 (GNPG…PGIS), 595–615 (KRDS…LSPV), 668–696 (SSST…EEKH), 711–741 (IGQS…KAAT), and 865–926 (MPVL…FLTR). Over residues 506–515 (NPGTTEILNP) the composition is skewed to polar residues. Composition is skewed to basic and acidic residues over residues 685–696 (SRQKSHTVEEKH) and 719–730 (GPEERRRKAQSD). Residues 887-897 (NNATNKRSMID) are compositionally biased toward polar residues. The span at 900 to 915 (PAERRTRPERPERPAR) shows a compositional bias: basic and acidic residues.

The protein belongs to the peptidase M24B family. Mn(2+) serves as cofactor.

It carries out the reaction Release of any N-terminal amino acid, including proline, that is linked to proline, even from a dipeptide or tripeptide.. Its function is as follows. Catalyzes the removal of a penultimate prolyl residue from the N-termini of peptides. This chain is Probable Xaa-Pro aminopeptidase PTT_10145, found in Pyrenophora teres f. teres (strain 0-1) (Barley net blotch fungus).